A 660-amino-acid chain; its full sequence is Peroxisomal acyl-coenzyme A oxidase 1 (660 aa).

Serine 26 bears the Phosphoserine mark. N6-succinyllysine is present on residues lysine 89 and lysine 90. Threonine 139 and glycine 178 together coordinate FAD. Lysine 216 is modified (N6-acetyllysine). An N6-succinyllysine modification is found at lysine 241. Residues lysine 255, lysine 267, and lysine 272 each carry the N6-acetyllysine modification. Residue lysine 349 is modified to N6-succinyllysine. The active-site Proton acceptor is glutamate 421. An N6-acetyllysine; alternate mark is found at lysine 437 and lysine 446. An N6-succinyllysine; alternate mark is found at lysine 437 and lysine 446. Lysine 500 carries the N6-acetyllysine modification. Lysine 512 is subject to N6-acetyllysine; alternate. Lysine 512 carries the post-translational modification N6-succinyllysine; alternate. An N6-succinyllysine modification is found at lysine 542. Lysine 637 carries the N6-acetyllysine; alternate modification. An N6-succinyllysine; alternate modification is found at lysine 637. Lysine 643 carries the post-translational modification N6-succinyllysine. At serine 649 the chain carries Phosphoserine. At lysine 651 the chain carries N6-acetyllysine. Position 654 is an N6-succinyllysine (lysine 654). The Microbody targeting signal signature appears at 658 to 660; sequence SKL.

The protein belongs to the acyl-CoA oxidase family. Homodimer. Interacts with LONP2. FAD is required as a cofactor.

It localises to the peroxisome. It carries out the reaction a 2,3-saturated acyl-CoA + O2 = a (2E)-enoyl-CoA + H2O2. It catalyses the reaction hexadecanoyl-CoA + O2 = (2E)-hexadecenoyl-CoA + H2O2. The enzyme catalyses dodecanoyl-CoA + O2 = (2E)-dodecenoyl-CoA + H2O2. The catalysed reaction is octanoyl-CoA + O2 = (2E)-octenoyl-CoA + H2O2. It carries out the reaction decanoyl-CoA + O2 = (2E)-decenoyl-CoA + H2O2. It catalyses the reaction tetradecanoyl-CoA + O2 = (2E)-tetradecenoyl-CoA + H2O2. The enzyme catalyses hexadecanedioyl-CoA + O2 = (2E)-hexadecenedioyl-CoA + H2O2. The catalysed reaction is tetracosanoyl-CoA + O2 = (2E)-tetracosenoyl-CoA + H2O2. It carries out the reaction glutaryl-CoA + O2 = (2E)-glutaconyl-CoA + H2O2. It catalyses the reaction hexanoyl-CoA + O2 = (2E)-hexenoyl-CoA + H2O2. The enzyme catalyses octadecanoyl-CoA + O2 = (2E)-octadecenoyl-CoA + H2O2. The catalysed reaction is (5Z,8Z,11Z,14Z,17Z)-eicosapentaenoyl-CoA + O2 = (2E,5Z,8Z,11Z,14Z,17Z)-icosahexaenoyl-CoA + H2O2. It carries out the reaction (6Z,9Z,12Z,15Z,18Z,21Z)-tetracosahexaenoyl-CoA + O2 = (2E,6Z,9Z,12Z,15Z,18Z,21Z)-tetracosaheptaenoyl-CoA + H2O2. Its pathway is lipid metabolism; peroxisomal fatty acid beta-oxidation. Its function is as follows. Involved in the initial and rate-limiting step of peroxisomal beta-oxidation of straight-chain saturated and unsaturated very-long-chain fatty acids. Catalyzes the desaturation of fatty acyl-CoAs such as palmitoyl-CoA (hexadecanoyl-CoA) to 2-trans-enoyl-CoAs ((2E)-enoyl-CoAs) such as (2E)-hexadecenoyl-CoA, and donates electrons directly to molecular oxygen (O(2)), thereby producing hydrogen peroxide (H(2)O(2)). Shows highest activity against medium-chain fatty acyl-CoAs. Shows optimum activity with a chain length of 10 carbons (decanoyl-CoA) in vitro. In terms of biological role, is active against a much broader range of substrates and shows activity towards long-chain acyl-CoAs. This is Peroxisomal acyl-coenzyme A oxidase 1 from Pongo abelii (Sumatran orangutan).